Consider the following 212-residue polypeptide: Thiamine-phosphate synthase (212 aa).

4-amino-2-methyl-5-(diphosphooxymethyl)pyrimidine-binding positions include 40-44 (QFREK) and Asn-75. Mg(2+) is bound by residues Asp-76 and Asp-95. Position 113 (Ser-113) interacts with 4-amino-2-methyl-5-(diphosphooxymethyl)pyrimidine. Residue 139–141 (TIS) coordinates 2-[(2R,5Z)-2-carboxy-4-methylthiazol-5(2H)-ylidene]ethyl phosphate. Position 142 (Lys-142) interacts with 4-amino-2-methyl-5-(diphosphooxymethyl)pyrimidine. 2-[(2R,5Z)-2-carboxy-4-methylthiazol-5(2H)-ylidene]ethyl phosphate contacts are provided by residues Gly-171 and 191–192 (IS).

It belongs to the thiamine-phosphate synthase family. Requires Mg(2+) as cofactor.

It carries out the reaction 2-[(2R,5Z)-2-carboxy-4-methylthiazol-5(2H)-ylidene]ethyl phosphate + 4-amino-2-methyl-5-(diphosphooxymethyl)pyrimidine + 2 H(+) = thiamine phosphate + CO2 + diphosphate. The enzyme catalyses 2-(2-carboxy-4-methylthiazol-5-yl)ethyl phosphate + 4-amino-2-methyl-5-(diphosphooxymethyl)pyrimidine + 2 H(+) = thiamine phosphate + CO2 + diphosphate. It catalyses the reaction 4-methyl-5-(2-phosphooxyethyl)-thiazole + 4-amino-2-methyl-5-(diphosphooxymethyl)pyrimidine + H(+) = thiamine phosphate + diphosphate. It functions in the pathway cofactor biosynthesis; thiamine diphosphate biosynthesis; thiamine phosphate from 4-amino-2-methyl-5-diphosphomethylpyrimidine and 4-methyl-5-(2-phosphoethyl)-thiazole: step 1/1. Functionally, condenses 4-methyl-5-(beta-hydroxyethyl)thiazole monophosphate (THZ-P) and 2-methyl-4-amino-5-hydroxymethyl pyrimidine pyrophosphate (HMP-PP) to form thiamine monophosphate (TMP). This is Thiamine-phosphate synthase from Staphylococcus haemolyticus (strain JCSC1435).